The chain runs to 588 residues: Pre-mRNA 3'-end-processing factor FIP1 (588 aa).

The span at Met-1–Val-10 shows a compositional bias: basic and acidic residues. Disordered stretches follow at residues Met-1–Val-81, Gln-223–Asp-291, and Val-334–Glu-588. Residues Met-1–Gly-96 are sufficient for interaction with PAPOLA. The tract at residues Met-1–Pro-341 is necessary for stimulating PAPOLA activity. Composition is skewed to acidic residues over residues Gly-19–Asn-40 and Thr-66–Asp-80. 3 positions are modified to phosphoserine: Ser-70, Ser-72, and Ser-74. Residues Lys-122–Asn-228 are sufficient for interaction with CPSF4. The segment covering Ser-259–Ser-270 has biased composition (low complexity). The span at Trp-280 to Asp-291 shows a compositional bias: basic and acidic residues. At Ser-289 the chain carries Phosphoserine. Positions Lys-340 to Leu-398 are enriched in pro residues. Phosphotyrosine is present on Tyr-420. Positions Ser-437–Glu-588 are sufficient for interaction with CPSF1 and CSTF3. The span at Tyr-448–Ser-486 shows a compositional bias: basic and acidic residues. The tract at residues Arg-451–Asp-484 is arg/Asp/Glu-rich domain. Ser-486 carries the phosphoserine modification. Thr-488 bears the Phosphothreonine mark. Residues Ser-490 and Ser-494 each carry the phosphoserine modification. Over residues Asp-495–His-522 the composition is skewed to basic and acidic residues. Residues Lys-536–Arg-545 show a composition bias toward basic residues. Residue Ser-548 is modified to Phosphoserine. Residues His-554 to Arg-564 are compositionally biased toward basic residues.

Belongs to the FIP1 family. Component of the cleavage and polyadenylation specificity factor (CPSF) complex, composed of CPSF1, CPSF2, CPSF3, CPSF4 and FIP1L1. Found in a complex with CPSF1, FIP1L1 and PAPOLA. Interacts with CPSF1, CPSF4, CSTF2 and CSTF3. Interacts with AHCYL1 (when phosphorylated); the interaction is direct and associates AHCYL1 with the CPSF complex and RNA. Interacts with PAPOLA; the interaction seems to be increased by the interaction with AHCYL1. Interacts with NUDT21/CPSF5; this interaction occurs in a RNA sequence-specific manner. Interacts (preferentially via unphosphorylated form and Arg/Glu/Asp-rich domain) with CPSF6 (via Arg/Ser-rich domain); this interaction mediates, at least in part, the interaction between the CFIm and CPSF complexes and may be inhibited by CPSF6 hyper-phosphorylation. Interacts (preferentially via unphosphorylated form and Arg/Asp/Glu-rich domain) with CPSF7 (via Arg/Ser-rich domain); this interaction mediates, at least in part, the interaction between the CFIm and CPSF complexes and may be inhibited by CPSF7 hyper-phosphorylation.

It localises to the nucleus. In terms of biological role, component of the cleavage and polyadenylation specificity factor (CPSF) complex that plays a key role in pre-mRNA 3'-end formation, recognizing the AAUAAA signal sequence and interacting with poly(A) polymerase and other factors to bring about cleavage and poly(A) addition. FIP1L1 contributes to poly(A) site recognition and stimulates poly(A) addition. Binds to U-rich RNA sequence elements surrounding the poly(A) site. May act to tether poly(A) polymerase to the CPSF complex. The protein is Pre-mRNA 3'-end-processing factor FIP1 (FIP1L1) of Pongo abelii (Sumatran orangutan).